Consider the following 294-residue polypeptide: MFKRSLFILLLLAASLVKAEIIEVDSLNKIKQDFKENYNKNYVPQDLLVVTVLDEFLFKSLVPIGEQIDKDIYLTLTPLLRNINKNSKAIYIDQLILTNDSYKKELQESDFPNFVNEMSNSKIPIIAVNDGFTGNFNNIPKFEIWFADYLKKNFNIDFSNSFPNNNYIIFNNLDSFANTYPVFYKGILTSNNISKAEMMLNFLIQVGFMPKAFIIISNNIELLKSMEFQLNSYSSNILFIGYHYNNKNTPENKDAAYYTKIINDLISQINKIKRNNPPLKTNKIKDKNPYDKNQ.

An N-terminal signal peptide occupies residues 1–19 (MFKRSLFILLLLAASLVKA).

This is an uncharacterized protein from Rickettsia felis (strain ATCC VR-1525 / URRWXCal2) (Rickettsia azadi).